The primary structure comprises 269 residues: Tryptophan synthase alpha chain (269 aa).

Catalysis depends on proton acceptor residues Glu-45 and Asp-56.

Belongs to the TrpA family. As to quaternary structure, tetramer of two alpha and two beta chains.

The enzyme catalyses (1S,2R)-1-C-(indol-3-yl)glycerol 3-phosphate + L-serine = D-glyceraldehyde 3-phosphate + L-tryptophan + H2O. It functions in the pathway amino-acid biosynthesis; L-tryptophan biosynthesis; L-tryptophan from chorismate: step 5/5. The alpha subunit is responsible for the aldol cleavage of indoleglycerol phosphate to indole and glyceraldehyde 3-phosphate. The protein is Tryptophan synthase alpha chain of Shouchella clausii (strain KSM-K16) (Alkalihalobacillus clausii).